A 529-amino-acid polypeptide reads, in one-letter code: Type I restriction enzyme StySPI methylase subunit (529 aa).

S-adenosyl-L-methionine-binding positions include 148–153 (QYFTPR), 178–180 (TAG), and Glu216. A disordered region spans residues 424 to 443 (AEESEVADSEENKNADQHQA).

It belongs to the N(4)/N(6)-methyltransferase family. As to quaternary structure, the type I restriction/modification system is composed of three polypeptides R, M and S; the restriction enzyme has stoichiometry R(2)M(2)S(1) while the methyltransferase is M(2)S(1).

It carries out the reaction a 2'-deoxyadenosine in DNA + S-adenosyl-L-methionine = an N(6)-methyl-2'-deoxyadenosine in DNA + S-adenosyl-L-homocysteine + H(+). The subtype gamma methyltransferase (M) subunit of a type I restriction enzyme. The M and S subunits together form a methyltransferase (MTase) that methylates A-2 on the top strand and A-3 on the bottom strand of the sequence 5'-AACN(6)GTRC-3'. In the presence of the R subunit the complex can also act as an endonuclease, binding to the same target sequence but cutting the DNA some distance from this site. Whether the DNA is cut or modified depends on the methylation state of the target sequence. When the target site is unmodified, the DNA is cut. When the target site is hemimethylated, the complex acts as a maintenance MTase modifying the DNA so that both strands become methylated. After locating a non-methylated recognition site, the enzyme complex serves as a molecular motor that translocates DNA in an ATP-dependent manner until a collision occurs that triggers cleavage. The polypeptide is Type I restriction enzyme StySPI methylase subunit (Salmonella potsdam).